The primary structure comprises 620 residues: Putative ribonuclease H protein At1g65750 (620 aa).

Positions 456–586 (CVGWVKVNTD…ADGLANYAFS (131 aa)) constitute an RNase H type-1 domain. Aspartate 465, glutamate 505, aspartate 529, and aspartate 578 together coordinate Mg(2+).

Requires Mg(2+) as cofactor.

It carries out the reaction Endonucleolytic cleavage to 5'-phosphomonoester.. This is Putative ribonuclease H protein At1g65750 from Arabidopsis thaliana (Mouse-ear cress).